Consider the following 137-residue polypeptide: Basic phospholipase A2 PeBP(R)-I/II (137 aa).

An N-terminal signal peptide occupies residues 1 to 16 (MRTLWIMAVLLLGVEG). Intrachain disulfides connect C42/C131, C44/C60, C59/C111, C65/C137, C66/C104, C73/C97, and C91/C102. H63 is an active-site residue. Residue D105 is part of the active site.

Belongs to the phospholipase A2 family. Group II subfamily. R49 sub-subfamily. As to expression, expressed by the venom gland.

It localises to the secreted. It carries out the reaction a 1,2-diacyl-sn-glycero-3-phosphocholine + H2O = a 1-acyl-sn-glycero-3-phosphocholine + a fatty acid + H(+). Its function is as follows. Snake venom phospholipases A2 that have myotoxic, and edema-inducing activity, as well as extremely weak lipolytic activity. PLA2 catalyzes the calcium-dependent hydrolysis of the 2-acyl groups in 3-sn-phosphoglycerides. This chain is Basic phospholipase A2 PeBP(R)-I/II, found in Protobothrops elegans (Elegant pitviper).